The primary structure comprises 368 residues: Polynucleotide 5'-hydroxyl-kinase NOL9 (368 aa).

Position 36-43 (36-43) interacts with ATP; that stretch reads GPKNSGKS.

The protein belongs to the Clp1 family. NOL9/GRC3 subfamily.

The protein resides in the nucleus. Its subcellular location is the nucleolus. Its function is as follows. Polynucleotide 5'-kinase involved in rRNA processing. The chain is Polynucleotide 5'-hydroxyl-kinase NOL9 from Arabidopsis thaliana (Mouse-ear cress).